A 396-amino-acid chain; its full sequence is Putative cyclin-B3-1 (396 aa).

The tract at residues 1 to 98 (MLRDGNKQSK…KVLDVTAKPK (98 aa)) is disordered. Polar residues predominate over residues 21–32 (KTTVKTSLQNRS). A compositionally biased stretch (low complexity) spans 39–57 (VGRSKSRSISSIPSSAVAS). A compositionally biased stretch (polar residues) spans 76–85 (GESSSSGNKD).

It belongs to the cyclin family. Cyclin AB subfamily.

This Arabidopsis thaliana (Mouse-ear cress) protein is Putative cyclin-B3-1 (CYCB3-1).